The sequence spans 311 residues: Ribosomal RNA small subunit methyltransferase H (311 aa).

Residues 32-34 (AGH), aspartate 52, phenylalanine 79, aspartate 100, and glutamine 107 each bind S-adenosyl-L-methionine. The interval 287–311 (TASQEELEENNRARSAKLRIAEKRK) is disordered. The segment covering 300–311 (RSAKLRIAEKRK) has biased composition (basic residues).

It belongs to the methyltransferase superfamily. RsmH family.

The protein resides in the cytoplasm. It carries out the reaction cytidine(1402) in 16S rRNA + S-adenosyl-L-methionine = N(4)-methylcytidine(1402) in 16S rRNA + S-adenosyl-L-homocysteine + H(+). Its function is as follows. Specifically methylates the N4 position of cytidine in position 1402 (C1402) of 16S rRNA. The sequence is that of Ribosomal RNA small subunit methyltransferase H from Bacillus subtilis (strain 168).